A 410-amino-acid chain; its full sequence is Cytochrome P450 105A3 (410 aa).

Residue Cys-359 coordinates heme.

Belongs to the cytochrome P450 family. As to quaternary structure, monomer. Heme serves as cofactor.

Functionally, catalyzes the hydroxylation of sodium ML-236B carboxylate to pravastatin. This Streptomyces carbophilus protein is Cytochrome P450 105A3 (cyp105A3).